Reading from the N-terminus, the 85-residue chain is Small ribosomal subunit protein bS16c (85 aa).

The protein belongs to the bacterial ribosomal protein bS16 family.

It is found in the plastid. It localises to the chloroplast. In Saccharum hybrid (Sugarcane), this protein is Small ribosomal subunit protein bS16c.